Reading from the N-terminus, the 2176-residue chain is MSNVHQFDTQTMAESPQIRRDMGRLCATWPSKDSEDGAGTALRAATPLTANGATTTGLSVTLAPKDMQRNHLLKMPTATIEKPTITATIASSSSTSTSTTRKSVTATRSLKLNPNILLPTLRILARGLLLPALILAILVGSSQAGFACLSNPCVFGVCIDGLNSSYSCYCIDGYTGIQCQTNWDECWSSPCQNGGTCVDGVAYYNCTCPEGFSGSNCEENVDECMSNPCQNGGLCRDRTNGYICTCQPGYLGSHCELDVAVCETGTGARCQHGGECIEGPGLEFTCDCPAGWHGRICQEEINECASSPCQNGGVCVDKLAAYACACPMGYTGINCEEEILICADNPCQNNALCLMEEGVPTCYCVPDYHGEKCEFQYDECQLGPRCMNGGVCIDGVDTFSCSCPPLLTGMLCECLMVGEESLDCNYTAPATQSPPRRTTTTSTMAPPTVRPVTPPETTVSPSRASEEVEIIVVTTSAPAEVVTSVLSPSSSSSSSEEGVSVEIKTPTVAPPESGSHSISVEQTTAVPAQPEPESEQEPESKPHPESESASESETETEEEIIPGTTARPPTSRSSSSSEESPSIFTTLPPLPGKPQTSASSESSGEVVTSEEYTTVPHFEVSGSKSESGSEEVTTVRPTAAPSITISVDITSSGSSSSSSESVEVFTTPAPVFVQRVTTIETSISIDYVTPTPLPETTTPRVVPVPRPTFAPEPPLDVVETTASTHHLWTEVPTTAAPFFTEYPAEVLITTHRTSAGRFTTVQPPAGVTTTSPTEDSSVELPTPHTPQIVVTILDSNEVIPSLITTTGSPTTHHHHHHHPHHEAEGTTLQPLEEDEHHHHHHHDEFTTPQPVEITTGHPLQTEDLIGVQEPAVVTTESPFAPAETTVVPVVVPATIAPLGTAAPPATPAPVPPATTTPPPSPPSLATETPTLPPTLPPVTLPPVTQPPPTIPPTPPSTQSAQTLPPPTSAINVYTTPDGPPTASQTKPSVTESSEEVEGTNTVSTGGRGSGGVPEEKAGDVDCIKLGCYNGGTCVTTSEGSRCVCRFDRQGPLCELPIIIRNAAFSGDSYVSHRIYKDIGGHESLDAVLPMHIQLKVRTRATNGLIMLAAAQGTKGGHYMALFLQKGLMQFQFSCGLQTMLLSELETPVNTGHEITIRAELDFSRNYTHCNASLLVNDTLAMSGDQPTWLKLLPPRLHTPEAILNTWLHLGGAPQAPIGLIIELPPAQSGSGFTGCLHTLRINGQAREIFGDALDGFGITECGSLACLSSPCRNGAACIKIETNDLDENGEKAEKWKCKCPTGYMGPTCEISVCEDNPCQYGGTCVQFPGSGYLCLCPLGKHGHYCEHNLEVALPSFSGSVNGLSSFVAYTVPIPLEYSLELSFKILPQTMSQISLLAFFGQSGYHDEKSDHLAVSFIQGYIMLTWNLGAGPRRIFTQKPIDFRLDAPRVPYEIKVGRIGRQAWLSVDGKFNITGRSPGSGSRMDVLPILYLGGHEIANFNTLPHDLPLHSGFQGCIYDVQLKAGQVTVPLQETRGVRGRGVGQCGTRECHRHACQHDGACLQHGATFTCICQEGWYGPLCAQPTNPCDSFNNKCYEDATCVPLVNGYECDCPVGRTGKNCEEVIRSLSDVSLTGRRSYLAVRWPYLYDGGDKLGAKRSQMVSYRNFTKKLMPPKPITTPSSHFVMKLLNEVEKQRSFSPVPLMGSKSFEEHHRVQFFFIEFQLRPLSERGLLLYFGTLNNNQDKKIGFVSLSLQGGVVEFRISGPSNHVTVVRSVRMLAIGEWHKIKMAQRGRWLTLWVEGSASSALAPSAEVLVEPDSLLYIGGLKDVSKLPHNAISGFPIPFRGCVRGLVVSGTRIVLNETNIVESRNIRDCDGTACGGDSCESGGHCWLDEKLQPHCICPEYAKGDRCEYSETCKLIPCKNNGRCLRSGRCSCPNGWGGFYCEIAMSKPTTPSFRGNSYLILPPPRIPMKDKRRGPSLYVRPREAIQVSLNFSTIEPDGLLLWSEHERSKFLGLGLEAGHLKLASNLLGSTNDTVRAPASGFIADGAWHWTSVLLDRSRLELQLDGEVIFTERLPEGGRSLGSTTPRSTLAGRRKNSSKEPTISYEDVFYLGGFPNSDSVSRRTKGRFFDPFKGCLQDIQFGAEPTAIISDFSTYQGENIGSCDLHGDEPLTV.

Residues 1–122 (MSNVHQFDTQ…NPNILLPTLR (122 aa)) lie on the Cytoplasmic side of the membrane. A helical transmembrane segment spans residues 123 to 143 (ILARGLLLPALILAILVGSSQ). One can recognise an EGF-like 1 domain in the interval 144-180 (AGFACLSNPCVFGVCIDGLNSSYSCYCIDGYTGIQCQ). Residues 144 to 2176 (AGFACLSNPC…DLHGDEPLTV (2033 aa)) lie on the Extracellular side of the membrane. 21 cysteine pairs are disulfide-bonded: Cys-148–Cys-158, Cys-153–Cys-168, Cys-170–Cys-179, Cys-186–Cys-197, Cys-191–Cys-206, Cys-208–Cys-217, Cys-224–Cys-235, Cys-229–Cys-244, Cys-246–Cys-255, Cys-262–Cys-276, Cys-270–Cys-286, Cys-288–Cys-297, Cys-304–Cys-315, Cys-309–Cys-324, Cys-326–Cys-335, Cys-342–Cys-353, Cys-347–Cys-362, Cys-364–Cys-373, Cys-380–Cys-392, Cys-386–Cys-401, and Cys-403–Cys-412. The N-linked (GlcNAc...) asparagine glycan is linked to Asn-163. An EGF-like 2; calcium-binding domain is found at 182 to 218 (NWDECWSSPCQNGGTCVDGVAYYNCTCPEGFSGSNCE). The N-linked (GlcNAc...) asparagine glycan is linked to Asn-205. The EGF-like 3; calcium-binding domain maps to 220–256 (NVDECMSNPCQNGGLCRDRTNGYICTCQPGYLGSHCE). The region spanning 258–298 (DVAVCETGTGARCQHGGECIEGPGLEFTCDCPAGWHGRICQ) is the EGF-like 4 domain. The region spanning 300–336 (EINECASSPCQNGGVCVDKLAAYACACPMGYTGINCE) is the EGF-like 5; calcium-binding domain. In terms of domain architecture, EGF-like 6 spans 338–374 (EILICADNPCQNNALCLMEEGVPTCYCVPDYHGEKCE). An EGF-like 7; calcium-binding domain is found at 376–413 (QYDECQLGPRCMNGGVCIDGVDTFSCSCPPLLTGMLCE). Asn-425 carries an N-linked (GlcNAc...) asparagine glycan. Low complexity-rich tracts occupy residues 429–447 (PATQ…MAPP) and 482–502 (VTSV…VSVE). 5 disordered regions span residues 429–465 (PATQ…SRAS), 482–639 (VTSV…RPTA), 757–783 (RFTT…LPTP), 802–854 (LITT…VEIT), and 902–1014 (APPA…GVPE). Residues 514-526 (GSHSISVEQTTAV) are compositionally biased toward polar residues. Residues 548 to 560 (SASESETETEEEI) show a composition bias toward acidic residues. Low complexity-rich tracts occupy residues 564-582 (TTAR…ESPS) and 596-632 (TSAS…SEEV). The span at 757-775 (RFTTVQPPAGVTTTSPTED) shows a compositional bias: polar residues. A compositionally biased stretch (basic residues) spans 811-820 (THHHHHHHPH). 2 stretches are compositionally biased toward pro residues: residues 904–922 (PATP…PSPP) and 930–955 (TLPP…PTPP). Residues 1018–1054 (GDVDCIKLGCYNGGTCVTTSEGSRCVCRFDRQGPLCE) enclose the EGF-like 8 domain. 3 disulfides stabilise this stretch: Cys-1022–Cys-1033, Cys-1027–Cys-1042, and Cys-1044–Cys-1053. Residues 1059–1266 (IRNAAFSGDS…GITECGSLAC (208 aa)) enclose the Laminin G-like 1 domain. 3 N-linked (GlcNAc...) asparagine glycosylation sites follow: Asn-1165, Asn-1170, and Asn-1176. One can recognise an EGF-like 9 domain in the interval 1309-1346 (EISVCEDNPCQYGGTCVQFPGSGYLCLCPLGKHGHYCE). Intrachain disulfides connect Cys-1313–Cys-1324, Cys-1318–Cys-1334, and Cys-1336–Cys-1345. Positions 1353–1549 (LPSFSGSVNG…GVGQCGTREC (197 aa)) constitute a Laminin G-like 2 domain. N-linked (GlcNAc...) asparagine glycosylation occurs at Asn-1471. 2 consecutive EGF-like domains span residues 1545-1581 (GTRE…PLCA) and 1583-1621 (PTNP…KNCE). Disulfide bonds link Cys-1549–Cys-1560, Cys-1554–Cys-1569, Cys-1571–Cys-1580, Cys-1587–Cys-1600, Cys-1594–Cys-1609, and Cys-1611–Cys-1620. 2 N-linked (GlcNAc...) asparagine glycosylation sites follow: Asn-1665 and Asn-1861. The Laminin G-like 3 domain occupies 1692–1879 (EKQRSFSPVP…NIRDCDGTAC (188 aa)). 2 EGF-like domains span residues 1875 to 1912 (DGTA…DRCE) and 1913 to 1946 (YSET…FYCE). Intrachain disulfides connect Cys-1879–Cys-1890, Cys-1884–Cys-1900, Cys-1902–Cys-1911, Cys-1917–Cys-1928, Cys-1922–Cys-1934, and Cys-1936–Cys-1945. The 215-residue stretch at 1952–2166 (PTTPSFRGNS…TYQGENIGSC (215 aa)) folds into the Laminin G-like 4 domain. 3 N-linked (GlcNAc...) asparagine glycosylation sites follow: Asn-1994, Asn-2035, and Asn-2099. The tract at residues 2080 to 2101 (GGRSLGSTTPRSTLAGRRKNSS) is disordered.

Belongs to the EYS family. As to expression, expressed from the beginning of rhabdomere biogenesis (48 hours after pupal formation), when it decorates the entire photoreceptor apical surface.

The protein resides in the membrane. Its subcellular location is the secreted. Essential for the formation of matrix-filled interrhabdomeral space: critical for the formation of epithelial lumina in the retina. Acts together with prominin (prom) and the cell adhesion molecule chaoptin (chp) to choreograph the partitioning of rhabdomeres into an open system. In Drosophila melanogaster (Fruit fly), this protein is Protein eyes shut.